A 344-amino-acid chain; its full sequence is Dihydroorotase (344 aa).

Zn(2+) is bound by residues His-13 and His-15. Substrate contacts are provided by residues 15–17 (HFR) and Asn-41. Zn(2+) contacts are provided by Lys-98, His-135, and His-173. At Lys-98 the chain carries N6-carboxylysine. His-135 is a substrate binding site. Residue Leu-218 coordinates substrate. Position 246 (Asp-246) interacts with Zn(2+). Asp-246 is a catalytic residue. 2 residues coordinate substrate: His-250 and Ala-262.

Belongs to the metallo-dependent hydrolases superfamily. DHOase family. Class II DHOase subfamily. As to quaternary structure, homodimer. Zn(2+) serves as cofactor.

It carries out the reaction (S)-dihydroorotate + H2O = N-carbamoyl-L-aspartate + H(+). It participates in pyrimidine metabolism; UMP biosynthesis via de novo pathway; (S)-dihydroorotate from bicarbonate: step 3/3. Functionally, catalyzes the reversible cyclization of carbamoyl aspartate to dihydroorotate. This Shewanella sediminis (strain HAW-EB3) protein is Dihydroorotase.